Here is a 591-residue protein sequence, read N- to C-terminus: Aspartate--tRNA ligase (591 aa).

Residue Glu176 participates in L-aspartate binding. Residues 200–203 form an aspartate region; it reads QILK. An L-aspartate-binding site is contributed by Arg222. ATP is bound by residues 222-224 and Gln231; that span reads RDE. His450 provides a ligand contact to L-aspartate. Glu484 is a binding site for ATP. Position 491 (Arg491) interacts with L-aspartate. 536–539 contributes to the ATP binding site; it reads GLDR.

The protein belongs to the class-II aminoacyl-tRNA synthetase family. Type 1 subfamily. As to quaternary structure, homodimer.

Its subcellular location is the cytoplasm. The enzyme catalyses tRNA(Asp) + L-aspartate + ATP = L-aspartyl-tRNA(Asp) + AMP + diphosphate. In terms of biological role, catalyzes the attachment of L-aspartate to tRNA(Asp) in a two-step reaction: L-aspartate is first activated by ATP to form Asp-AMP and then transferred to the acceptor end of tRNA(Asp). The polypeptide is Aspartate--tRNA ligase (Listeria welshimeri serovar 6b (strain ATCC 35897 / DSM 20650 / CCUG 15529 / CIP 8149 / NCTC 11857 / SLCC 5334 / V8)).